The sequence spans 140 residues: Nucleoside diphosphate kinase (140 aa).

ATP contacts are provided by Lys-11, Phe-59, Arg-87, Thr-93, Arg-104, and Asn-114. The active-site Pros-phosphohistidine intermediate is His-117.

The protein belongs to the NDK family. Homotetramer. Mg(2+) is required as a cofactor.

The protein resides in the cytoplasm. It carries out the reaction a 2'-deoxyribonucleoside 5'-diphosphate + ATP = a 2'-deoxyribonucleoside 5'-triphosphate + ADP. The enzyme catalyses a ribonucleoside 5'-diphosphate + ATP = a ribonucleoside 5'-triphosphate + ADP. Its function is as follows. Major role in the synthesis of nucleoside triphosphates other than ATP. The ATP gamma phosphate is transferred to the NDP beta phosphate via a ping-pong mechanism, using a phosphorylated active-site intermediate. The protein is Nucleoside diphosphate kinase of Hyphomonas neptunium (strain ATCC 15444).